Consider the following 1473-residue polypeptide: NACHT, LRR and PYD domains-containing protein 1 (1473 aa).

Residues 1 to 92 (MAGGAWGRLA…CAQAQEGAGH (92 aa)) enclose the Pyrin domain. Residues 90-113 (AGHSPSFPYSPSEPHLGSPSQPTS) form a disordered region. Phosphoserine; by MAPK11 and MAPK14 occurs at positions 93, 99, and 101. Serine 107 is modified (phosphoserine; by MAPK14). Residues 111 to 117 (PTSTAVL) carry the ZAKalpha motif 1 motif. Threonine 112 bears the Phosphothreonine; by MAPK11, MAPK14 and MAP3K20 mark. Serine 113 carries the phosphoserine; by MAP3K20 modification. 2 positions are modified to phosphothreonine; by MAP3K20: threonine 114 and threonine 129. Position 132 is a phosphoserine; by MAP3K20 (serine 132). Residues 160–254 (LPSSPDHESP…HTSLQPHHHP (95 aa)) are disordered. Residue serine 163 is modified to Phosphoserine; by MAPK14. Serine 168 bears the Phosphoserine; by MAPK11 and MAPk14 mark. Serine 170 bears the Phosphoserine; by MAPK11 and MAPK14 mark. Positions 170–182 (SQESPNAPTSTAV) are enriched in polar residues. Serine 173 bears the Phosphoserine; by MAPK11 mark. A ZAKalpha motif 2 motif is present at residues 177–183 (PTSTAVL). Threonine 178 bears the Phosphothreonine; by MAPK11 mark. Serine 179 is subject to Phosphoserine; by MAPK11 and MAP3K20. At threonine 180 the chain carries Phosphothreonine; by MAPK11 and MAP3K20. A compositionally biased stretch (basic and acidic residues) spans 218–231 (EIREREREKSEKGR). An NACHT domain is found at 328–637 (RIVILQGAAG…EFFAAMSYVL (310 aa)). An ATP-binding site is contributed by 334–341 (GAAGIGKS). 6 LRR repeats span residues 809–830 (NLKE…SLCK), 838–858 (LLET…KDLA), 866–887 (TLTE…HLCQ), 895–915 (KLQR…QDLA), 923–944 (SLKE…LLCE), and 950–973 (ACKL…ELRA). The segment at 991–1017 (VMTPTEGLDTGEMSNSTSSLKRQRLGS) is disordered. Residues 1079–1212 (FWGPTGPVAT…HHIVLENPSF (134 aa)) form a ZU5 region. In terms of domain architecture, FIIND spans 1079–1364 (FWGPTGPVAT…LMPATTLIPP (286 aa)). The tract at residues 1213-1364 (SPLGVLLKMI…LMPATTLIPP (152 aa)) is UPA. A CARD domain is found at 1374–1463 (DAPQLLHFVD…HLIMELWEKG (90 aa)).

The protein belongs to the NLRP family. As to quaternary structure, interacts (via LRR repeats) with BCL2 and BCL2L1 (via the loop between motifs BH4 and BH3); these interactions reduce NLRP1 inflammasome-induced CASP1 activation and IL1B release, possibly by impairing NLRP1 interaction with PYCARD. Interacts with NOD2; this interaction is enhanced in the presence of muramyl dipeptide (MDP) and increases IL1B release. Interacts with EIF2AK2/PKR; this interaction requires EIF2AK2 activity, is accompanied by EIF2AK2 autophosphorylation and promotes inflammasome assembly in response to danger-associated signals. Interacts with MEFV; this interaction targets NLRP1 to degradation by autophagy, hence preventing excessive IL1B- and IL18-mediated inflammation. Binds (via LRR domain) to dsDNA and dsRNA. Interacts with DPP9; leading to inhibit activation of the inflammasome. DPP9 acts via formation of a ternary complex, composed of a DPP9 homodimer, one full-length NLRP1 protein, and one cleaved C-terminus of NLRP1 (NACHT, LRR and PYD domains-containing protein 1, C-terminus). Interacts with DPP8; leading to inhibit activation of the inflammasome, probably via formation of a ternary complex with DPP8. In terms of assembly, interacts with the C-terminal part of NLRP1 (NACHT, LRR and PYD domains-containing protein 1, C-terminus) in absence of pathogens and other damage-associated signals. Interacts with the N-terminal part of NLRP1 (NACHT, LRR and PYD domains-containing protein 1, N-terminus) in absence of pathogens and other damage-associated signals. Homomultimer; forms the NLRP1 inflammasome polymeric complex, a filament composed of homopolymers of this form in response to pathogens and other damage-associated signals. The NLRP1 inflammasome polymeric complex associates with PYCARD/ASC. Interacts (via CARD domain) with PYCARD/ASC (via CARD domain); leading to pro-caspase-1 (proCASP1) recruitment. Pro-caspase-1 (proCASP1) filament formation increases local enzyme concentration, resulting in trans-autocleavage and activation. Active CASP1 then processes IL1B and IL18 precursors, leading to the release of mature cytokines in the extracellular milieu and inflammatory response. As to quaternary structure, (Microbial infection) Interacts with vaccinia virus protein F1. In terms of assembly, (Microbial infection) Interacts with human herpes virus 8/HHV-8 proteins ORF45; relieving autoinhibition of the NLRP1 inflammasome. Post-translationally, autocatalytically cleaved. Autocatalytic cleavage in FIIND region occurs constitutively, prior to activation signals, and is required for inflammasome activity (IL1B release), possibly by facilitating CASP1 binding. Both N- and C-terminal parts remain associated non-covalently. In terms of processing, ubiquitinated by the cullin:ZER1/ZYG11B complex in response to pathogen-associated signals, leading to its degradation by the proteasome and subsequent release of the cleaved C-terminal part of the protein (NACHT, LRR and PYD domains-containing protein 1, C-terminus), which polymerizes and forms the NLRP1 inflammasome. Phosphorylated by MAP3K20 isoform ZAKalpha, MAPK11 and MAPK14 in response to UV-B irradiation and ribosome collisions, promoting activation of the NLRP1 inflammasome and pyroptosis. Post-translationally, (Microbial infection) Cleaved between Gln-130 and Gly-131 by the Protease 3C from various human enteroviruses and rhinoviruses (EV68, EV71, Coxsackievirus B3, HRV-14 and HRV-16). This cleavage triggers N-glycine-mediated proteasomal degradation of the autoinhibitory NLRP1 N-terminal fragment via the cullin:ZER1/ZYG11B complex which liberates the activating C-terminal fragment and activates NLRP1 inflammasome. In terms of processing, (Microbial infection) Cleaved between Gln-333 and Gly-334 by the 3C-like proteinase nsp5 from human coronavirus SARS-CoV-2. This cleavage liberates the activating C-terminal fragment and activates NLRP1 inflammasome, leading to downstream activation of GSDME and lung epithelial cell death. Widely expressed. Abundantly expressed in primary immune cells (isoform 1 and isoform 2), including in neutrophils, monocytes/macrophages, dendritic cells (mostly Langerhans cells), and B- and T-lymphocytes (at protein level). Strongly expressed in epithelial cells lining the glandular epithelium, such as that of the gastrointestinal tract (stomach, small intestine, colon), the respiratory tract (trachea and bronchi), and the endometrial and endocervical glands, gallbladder, prostate, and breast (at protein level). In testis, expressed in spermatogonia and primary spermatocytes, but not in Sertoli cells (at protein level). In the brain, expressed in neurons, in particular in pyramidal ones and in oligodendrocytes, but not detected in microglia (at protein level). Expressed in adult and fetal ocular tissues, including in adult and 24-week old fetal choroid, sclera, cornea, and optic nerve, as well as in adult retina and fetal retina/retinal pigment epithelium. Highly expressed in the skin throughout the epidermis and in dermal fibroblasts, in both glabrous skin and plantar skin. It is detected in keratinocytes, but not in melanocytes. Expressed in epidermal appendages such as hair follicles.

It is found in the cytoplasm. It localises to the cytosol. Its subcellular location is the nucleus. The protein resides in the inflammasome. The catalysed reaction is ATP + H2O = ADP + phosphate + H(+). With respect to regulation, NLRP1 inflammasome is activated by cleavage by the Protease 3C from various human enteroviruses and rhinoviruses (EV68, EV71, Coxsackievirus B3, HRV-14 and HRV-16): cleavage promotes ubiquitination and degradation of the N-terminal part, releasing the cleaved C-terminal part of the protein (NACHT, LRR and PYD domains-containing protein 1, C-terminus), which polymerizes and forms the NLRP1 inflammasome. Activated double-stranded RNA: positive-strand RNA viruses such as Semliki forest virus and long dsRNA activate the NLRP1 inflammasome. In contrast to its mouse ortholog, not activated by Bacillus anthracis lethal toxin. NLRP1 inflammasome is inhibited by DPP8 and DPP9, which sequester the C-terminal fragment of NLRP1 (NACHT, LRR and PYD domains-containing protein 1, C-terminus) in a ternary complex, thereby preventing NLRP1 oligomerization and activation. NLRP1 inflammasome is activated by Val-boroPro (Talabostat, PT-100), an inhibitor of dipeptidyl peptidases DPP8 and DPP9. Val-boroPro relieves inhibition of DPP8 and/or DPP9 by promoting disruption of the ternary complex, releasing its C-terminal part from autoinhibition. ATPase activity is activated by dsRNA-binding but not dsDNA-binding. Its activity is regulated as follows. (Microbial infection) The NLRP1 inflammasome is activated by human herpes virus 8/HHV-8 protein ORF45, which interacts with the N-terminal part of NLRP1 and promotes its translocation into the nucleus, relieving autoinhibition and leading to activation. (Microbial infection) NLRP1 inflammasome is activated by cleavage by the 3C-like proteinase nsp5 from human coronavirus SARS-CoV-2. Acts as the sensor component of the NLRP1 inflammasome, which mediates inflammasome activation in response to various pathogen-associated signals, leading to subsequent pyroptosis. Inflammasomes are supramolecular complexes that assemble in the cytosol in response to pathogens and other damage-associated signals and play critical roles in innate immunity and inflammation. Acts as a recognition receptor (PRR): recognizes specific pathogens and other damage-associated signals, such as cleavage by some human enteroviruses and rhinoviruses, double-stranded RNA, UV-B irradiation, or Val-boroPro inhibitor, and mediates the formation of the inflammasome polymeric complex composed of NLRP1, CASP1 and PYCARD/ASC. In response to pathogen-associated signals, the N-terminal part of NLRP1 is degraded by the proteasome, releasing the cleaved C-terminal part of the protein (NACHT, LRR and PYD domains-containing protein 1, C-terminus), which polymerizes and associates with PYCARD/ASC to initiate the formation of the inflammasome complex: the NLRP1 inflammasome recruits pro-caspase-1 (proCASP1) and promotes caspase-1 (CASP1) activation, which subsequently cleaves and activates inflammatory cytokines IL1B and IL18 and gasdermin-D (GSDMD), leading to pyroptosis. In the absence of GSDMD expression, the NLRP1 inflammasome is able to recruit and activate CASP8, leading to activation of gasdermin-E (GSDME). Activation of NLRP1 inflammasome is also required for HMGB1 secretion; the active cytokines and HMGB1 stimulate inflammatory responses. Binds ATP and shows ATPase activity. Plays an important role in antiviral immunity and inflammation in the human airway epithelium. Specifically recognizes a number of pathogen-associated signals: upon infection by human rhinoviruses 14 and 16 (HRV-14 and HRV-16), NLRP1 is cleaved and activated which triggers NLRP1-dependent inflammasome activation and IL18 secretion. Positive-strand RNA viruses, such as Semliki forest virus and long dsRNA activate the NLRP1 inflammasome, triggering IL1B release in a NLRP1-dependent fashion. Acts as a direct sensor for long dsRNA and thus RNA virus infection. May also be activated by muramyl dipeptide (MDP), a fragment of bacterial peptidoglycan, in a NOD2-dependent manner. The NLRP1 inflammasome is also activated in response to UV-B irradiation causing ribosome collisions: ribosome collisions cause phosphorylation and activation of NLRP1 in a MAP3K20-dependent manner, leading to pyroptosis. Functionally, constitutes the precursor of the NLRP1 inflammasome, which mediates autoproteolytic processing within the FIIND domain to generate the N-terminal and C-terminal parts, which are associated non-covalently in absence of pathogens and other damage-associated signals. Its function is as follows. Regulatory part that prevents formation of the NLRP1 inflammasome: in absence of pathogens and other damage-associated signals, interacts with the C-terminal part of NLRP1 (NACHT, LRR and PYD domains-containing protein 1, C-terminus), preventing activation of the NLRP1 inflammasome. In response to pathogen-associated signals, this part is ubiquitinated and degraded by the proteasome, releasing the cleaved C-terminal part of the protein, which polymerizes and forms the NLRP1 inflammasome. In terms of biological role, constitutes the active part of the NLRP1 inflammasome. In absence of pathogens and other damage-associated signals, interacts with the N-terminal part of NLRP1 (NACHT, LRR and PYD domains-containing protein 1, N-terminus), preventing activation of the NLRP1 inflammasome. In response to pathogen-associated signals, the N-terminal part of NLRP1 is degraded by the proteasome, releasing this form, which polymerizes and associates with PYCARD/ASC to form of the NLRP1 inflammasome complex: the NLRP1 inflammasome complex then directly recruits pro-caspase-1 (proCASP1) and promotes caspase-1 (CASP1) activation, leading to gasdermin-D (GSDMD) cleavage and subsequent pyroptosis. It is unclear whether is involved in inflammasome formation. It is not cleaved within the FIIND domain, does not assemble into specks, nor promote IL1B release. However, in an vitro cell-free system, it has been shown to be activated by MDP. This chain is NACHT, LRR and PYD domains-containing protein 1, found in Homo sapiens (Human).